Reading from the N-terminus, the 200-residue chain is MDDKKKKRSPKPCLAQPAQAPGTLRRVPVPTSHSGSLALGLPHLPSPKQRAKFKRVGKEKCRPVLAGGGSGSAGTPLQHSFLTEVTDVYEMEGGLLNLLNDFHSGRLQAFGKECSFEQLEHVREMQEKLARLHFSLDVCGEEEDDEEEEDGVTEGLPEEQKKTMADRNLDQLLSNLEDLSNSIQKLHLAENAEPEEQSAA.

The residue at position 1 (Met1) is an N-acetylmethionine. Basic residues predominate over residues 1 to 10 (MDDKKKKRSP). The tract at residues 1–49 (MDDKKKKRSPKPCLAQPAQAPGTLRRVPVPTSHSGSLALGLPHLPSPKQ) is disordered. Phosphoserine occurs at positions 46 and 115. Residues 141-152 (EEEDDEEEEDGV) are compositionally biased toward acidic residues. Residues 141–164 (EEEDDEEEEDGVTEGLPEEQKKTM) form a disordered region. Residues 158–183 (EEQKKTMADRNLDQLLSNLEDLSNSI) are a coiled coil.

In terms of assembly, interacts with BBS1, BBS2, BBS4, BBS5, BBS6, BBS7 and TTC8/BBS8. Interacts with MAPKAP1/SIN1 isoform 1 and RICTOR.

Its subcellular location is the cytoplasm. It is found in the cytoskeleton. It localises to the microtubule organizing center. The protein resides in the centrosome. In terms of biological role, involved in ciliogenesis. Regulates cilia length through its interaction with MAPKAP1/SIN1 but independently of mTORC2 complex. Modulates mTORC2 complex assembly and function, possibly enhances AKT1 phosphorylation. Does not seem to modulate assembly and function of mTORC1 complex. This Homo sapiens (Human) protein is Coiled-coil domain-containing protein 28B (CCDC28B).